Here is a 624-residue protein sequence, read N- to C-terminus: MARLVLCALALLVAGGLADPVRNNVPQKPADPVFAKRQMDLMTLFFHVLEPNYIEANKVIVNTWSLEKNIEHFSNVTAVTTYIKMLENQCCVPRAVPFSILEDEHKFEVVTLFNVLHSAKDYDTFYKTAVYVRDRVNPDLFSYVLSAVIVNRPDTKGIYIPRVFEIFPSYFNNGEIMTTAARINTHGDRLVDFYPSTYKWDKNVVIRWNPHLALLQQPEHTYSLLHSRLQPQLILLQRSLSLPGWLQTEALPVNQHRRGEWFWFLHKQLIARYYMERLSNGLGEIPELGHETVKDGTTRSFGTTMEFSSPVRPNNFNLDQPEFVNEVEQIYDYERRVRDAIDQGYVLNHLGERIDISAPEAIEILGRVIEANVDSPNVQYYKDFISVWKKVLGNSLVHEHQYFHHYIPLVVPSVLEHYQTALRDPAFYMIWKRVLGLFQQWQEKLPHYKPEELAMPQVAIEKVDVDKLVTYFEYSYMNVTSGLPMNVEEAKELYDQVSVLVQHPRLNHKKFQVRVNVKTEVAKTVLVKFFLAPKYDSHGHEIPLHVNSYNFMQLDEFVYDLPQGESVITRDSVETTGNEWTTSYQVWDQAEKASREKHLSAKNMYFQDVLIYHKHTLNPCSHVE.

An N-terminal signal peptide occupies residues 1-18; it reads MARLVLCALALLVAGGLA. Residues N75 and N478 are each glycosylated (N-linked (GlcNAc...) asparagine).

It belongs to the hemocyanin family.

The protein localises to the secreted. It is found in the extracellular space. In Trichoplusia ni (Cabbage looper), this protein is Acidic juvenile hormone-suppressible protein 1 (AJSP-1).